A 259-amino-acid chain; its full sequence is Proteasome assembly chaperone 2 (259 aa).

It belongs to the PSMG2 family. Forms a heterodimer with psmg1. Post-translationally, degraded by the proteasome upon completion of 20S proteasome maturation.

Its subcellular location is the nucleus. In terms of biological role, chaperone protein which promotes assembly of the 20S proteasome as part of a heterodimer with psmg1. This chain is Proteasome assembly chaperone 2, found in Xenopus laevis (African clawed frog).